We begin with the raw amino-acid sequence, 96 residues long: Putative regulatory protein DET0036 (96 aa).

Belongs to the RemA family.

The chain is Putative regulatory protein DET0036 from Dehalococcoides mccartyi (strain ATCC BAA-2266 / KCTC 15142 / 195) (Dehalococcoides ethenogenes (strain 195)).